The chain runs to 250 residues: TBC1 domain family member 26 (250 aa).

One can recognise a Rab-GAP TBC domain in the interval Val-101–Ser-250.

Its function is as follows. May act as a GTPase-activating protein for Rab family protein(s). This Homo sapiens (Human) protein is TBC1 domain family member 26 (TBC1D26).